A 128-amino-acid chain; its full sequence is Large ribosomal subunit protein bL12c (128 aa).

Residues 103 to 128 are disordered; the sequence is QEGLGKDAAEDAKKQIEDAGGKVSLT. The segment covering 106–122 has biased composition (basic and acidic residues); that stretch reads LGKDAAEDAKKQIEDAG.

The protein belongs to the bacterial ribosomal protein bL12 family. Homodimer. Part of the ribosomal stalk of the 50S ribosomal subunit. Forms a multimeric L10(L12)X complex, where L10 forms an elongated spine to which 2 to 4 L12 dimers bind in a sequential fashion. Binds GTP-bound translation factors.

Its subcellular location is the plastid. The protein localises to the chloroplast. Its function is as follows. Forms part of the ribosomal stalk which helps the ribosome interact with GTP-bound translation factors. Is thus essential for accurate translation. The protein is Large ribosomal subunit protein bL12c of Thalassiosira pseudonana (Marine diatom).